The chain runs to 311 residues: Coproporphyrin III ferrochelatase 1 (311 aa).

Fe-coproporphyrin III-binding positions include Tyr12, Arg29, Arg45–Tyr46, Ser53, and Tyr124. Positions 182 and 263 each coordinate Fe(2+).

The protein belongs to the ferrochelatase family.

Its subcellular location is the cytoplasm. The catalysed reaction is Fe-coproporphyrin III + 2 H(+) = coproporphyrin III + Fe(2+). It participates in porphyrin-containing compound metabolism; protoheme biosynthesis. Its function is as follows. Involved in coproporphyrin-dependent heme b biosynthesis. Catalyzes the insertion of ferrous iron into coproporphyrin III to form Fe-coproporphyrin III. The sequence is that of Coproporphyrin III ferrochelatase 1 from Bacillus cereus (strain ATCC 14579 / DSM 31 / CCUG 7414 / JCM 2152 / NBRC 15305 / NCIMB 9373 / NCTC 2599 / NRRL B-3711).